A 595-amino-acid chain; its full sequence is Tumor necrosis factor receptor superfamily member 8 (595 aa).

A signal peptide spans 1–18 (MRVLLAALGLLFLGALRA). Residues 19-385 (FPQDRPFEDT…STGKPVLDAG (367 aa)) lie on the Extracellular side of the membrane. 3 TNFR-Cys repeats span residues 28 to 66 (TCHGNPSHYYDKAVRRCCYRCPMGLFPTQQCPQRPTDCR), 68 to 106 (QCEPDYYLDEADRCTACVTCSRDDLVEKTPCAWNSSRVC), and 107 to 150 (ECRP…TVCE). 8 disulfides stabilise this stretch: Cys29-Cys44, Cys45-Cys58, Cys48-Cys65, Cys69-Cys81, Cys84-Cys98, Cys87-Cys106, Cys108-Cys122, and Cys131-Cys149. A glycan (N-linked (GlcNAc...) asparagine) is linked at Asn32. A glycan (N-linked (GlcNAc...) asparagine) is linked at Asn101. The segment at 167-238 (KEPSSGTIPQ…PTQPCPEGSG (72 aa)) is disordered. Positions 179–194 (PTPVSPATSSASTMPV) are enriched in low complexity. TNFR-Cys repeat units follow at residues 205–241 (ASKLTRAPDSPSSVGRPSSDPGLSPTQPCPEGSGDCR), 243–281 (QCEPDYYLDEAGRCTACVSCSRDDLVEKTPCAWNSSRTC), and 282–325 (ECRP…TTFE). 6 disulfide bridges follow: Cys233/Cys240, Cys244/Cys256, Cys259/Cys273, Cys262/Cys281, Cys283/Cys297, and Cys289/Cys300. Asn276 carries an N-linked (GlcNAc...) asparagine glycan. The interval 323–355 (TFEAPPLGTQPDCNPTPENGEAPASTSPTQSLL) is disordered. Residue Asn336 is glycosylated (N-linked (GlcNAc...) asparagine). Residues 346-355 (ASTSPTQSLL) are compositionally biased toward polar residues. Residues 386–406 (PVLFWVILVLVVVVGSSAFLL) traverse the membrane as a helical segment. Residues 407 to 595 (CHRRACRKRI…DPLPTAASGK (189 aa)) are Cytoplasmic-facing. Residues Ser438 and Ser452 each carry the phosphoserine modification. Disordered stretches follow at residues 438–457 (SRPRRSSTQLRSGASVTEPV), 485–509 (LQDASPAGGPSSPRDLPEPRVSTEH), and 536–595 (EGRG…ASGK). Polar residues predominate over residues 443-452 (SSTQLRSGAS). Over residues 499–509 (DLPEPRVSTEH) the composition is skewed to basic and acidic residues.

Belongs to the TNFR8 family. In terms of assembly, interacts with TRAF1, TRAF2, TRAF3 and TRAF5. In terms of processing, phosphorylated on serine and tyrosine residues. Isoform 2 is constitutively phosphorylated. Detected in alveolar macrophages (at protein level).

It localises to the cell membrane. The protein localises to the cytoplasm. Its function is as follows. Receptor for TNFSF8/CD30L. May play a role in the regulation of cellular growth and transformation of activated lymphoblasts. Regulates gene expression through activation of NF-kappa-B. This chain is Tumor necrosis factor receptor superfamily member 8, found in Homo sapiens (Human).